Here is a 275-residue protein sequence, read N- to C-terminus: Elongation factor Ts (275 aa).

Residues 76–79 (TDFV) are involved in Mg(2+) ion dislocation from EF-Tu.

The protein belongs to the EF-Ts family.

It localises to the cytoplasm. Functionally, associates with the EF-Tu.GDP complex and induces the exchange of GDP to GTP. It remains bound to the aminoacyl-tRNA.EF-Tu.GTP complex up to the GTP hydrolysis stage on the ribosome. The chain is Elongation factor Ts from Corynebacterium glutamicum (strain R).